Here is a 264-residue protein sequence, read N- to C-terminus: tRNA pseudouridine synthase A (264 aa).

Asp-54 serves as the catalytic Nucleophile. Tyr-113 contributes to the substrate binding site.

Belongs to the tRNA pseudouridine synthase TruA family. In terms of assembly, homodimer.

It catalyses the reaction uridine(38/39/40) in tRNA = pseudouridine(38/39/40) in tRNA. Formation of pseudouridine at positions 38, 39 and 40 in the anticodon stem and loop of transfer RNAs. This is tRNA pseudouridine synthase A from Leptospira biflexa serovar Patoc (strain Patoc 1 / Ames).